The chain runs to 163 residues: uncharacterized protein (163 aa).

A disordered region spans residues 128 to 163; that stretch reads PKKEKIKKAKRKKKGAKRASKKQKAKSKSARKSRRV. Basic residues predominate over residues 129–163; it reads KKEKIKKAKRKKKGAKRASKKQKAKSKSARKSRRV.

This is an uncharacterized protein from Sulfurisphaera tokodaii (strain DSM 16993 / JCM 10545 / NBRC 100140 / 7) (Sulfolobus tokodaii).